The following is a 434-amino-acid chain: MTTLQVASSLNDIAQQTRQAASLLAMLSTEAKNQAIAAVAQALESAKEEILQANIDDCEAATAEGIAKPLYKRLQLDEHKLRDAIAGVRDVGKLADPIGQVQIQRELDTGLVLKRITCPLGVLGIIFEARPEAAIQIISLAIKSGNGVILKCGKEAVRSCEAIVKAVKQGLSTTDVNPEVVQLLTTREETLELLRLDKYVDLIIPRGSNSFVRFVQENTRIPVLGHADGICHVYIDKSADIEKAIAVSVDAKVQYPAACNAIETLLVHQSIAAEFLPKVAQALAEREVELKGDERTLQILPEIAAATAIDWETEYSDFILSIKIVDSLTEAIAHINQYGSRHTDAIITEDVAAVKTFFGLVNSAGVFHNCSTRFADGFRYGFGAEVGISTQQMPPRGPVGLEGLVTYKYQMTGAGHIVATYTGENAKPFTHKDF.

It belongs to the gamma-glutamyl phosphate reductase family.

The protein resides in the cytoplasm. It carries out the reaction L-glutamate 5-semialdehyde + phosphate + NADP(+) = L-glutamyl 5-phosphate + NADPH + H(+). It participates in amino-acid biosynthesis; L-proline biosynthesis; L-glutamate 5-semialdehyde from L-glutamate: step 2/2. In terms of biological role, catalyzes the NADPH-dependent reduction of L-glutamate 5-phosphate into L-glutamate 5-semialdehyde and phosphate. The product spontaneously undergoes cyclization to form 1-pyrroline-5-carboxylate. The sequence is that of Gamma-glutamyl phosphate reductase from Nostoc sp. (strain PCC 7120 / SAG 25.82 / UTEX 2576).